The chain runs to 142 residues: MSESIDFYDFERLLDKAYEELPENVKSHKSRFEVPPAVVTIAGNRTIIENFVDIAEAMNRDPSHLLKFILREVATAGTLEGRRVILQGRFTPYLIANKLKKYLKEYVICPVCGSPDTKIIKRDRFYFLKCEACGAETPIQHL.

It belongs to the eIF-2-beta/eIF-5 family. As to quaternary structure, heterotrimer composed of an alpha, a beta and a gamma chain.

EIF-2 functions in the early steps of protein synthesis by forming a ternary complex with GTP and initiator tRNA. The protein is Translation initiation factor 2 subunit beta of Thermococcus gammatolerans (strain DSM 15229 / JCM 11827 / EJ3).